Consider the following 73-residue polypeptide: Translation initiation factor IF-1 (73 aa).

The S1-like domain maps to 1 to 72; it reads MPKKDAIEVE…TRGRVTYRFK (72 aa).

The protein belongs to the IF-1 family. As to quaternary structure, component of the 30S ribosomal translation pre-initiation complex which assembles on the 30S ribosome in the order IF-2 and IF-3, IF-1 and N-formylmethionyl-tRNA(fMet); mRNA recruitment can occur at any time during PIC assembly.

Its subcellular location is the cytoplasm. Functionally, one of the essential components for the initiation of protein synthesis. Stabilizes the binding of IF-2 and IF-3 on the 30S subunit to which N-formylmethionyl-tRNA(fMet) subsequently binds. Helps modulate mRNA selection, yielding the 30S pre-initiation complex (PIC). Upon addition of the 50S ribosomal subunit IF-1, IF-2 and IF-3 are released leaving the mature 70S translation initiation complex. The chain is Translation initiation factor IF-1 from Dehalococcoides mccartyi (strain ATCC BAA-2266 / KCTC 15142 / 195) (Dehalococcoides ethenogenes (strain 195)).